Reading from the N-terminus, the 904-residue chain is Nitrate reductase [NADH] 1 (904 aa).

2 stretches are compositionally biased toward polar residues: residues 1 to 10 and 39 to 50; these read MAASVENRQF and STNFQKKPNSTI. The disordered stretch occupies residues 1-65; the sequence is MAASVENRQF…SSEDDDDDDE (65 aa). A compositionally biased stretch (acidic residues) spans 56–65; it reads SSEDDDDDDE. Cys183 serves as a coordination point for Mo-molybdopterin. One can recognise a Cytochrome b5 heme-binding domain in the interval 531–606; that stretch reads SKMYSMSEVR…LEEFRIGELL (76 aa). 2 residues coordinate heme: His566 and His589. Residues 647–759 form the FAD-binding FR-type domain; that stretch reads REKIPCKLID…KGPLGHIEYQ (113 aa). FAD is bound by residues 699 to 702, 716 to 720, Phe721, Phe728, 733 to 735, and Thr786; these read RAYT, VVKIY, and QMS.

This sequence belongs to the nitrate reductase family. As to quaternary structure, homodimer. Requires FAD as cofactor. It depends on heme as a cofactor. The cofactor is Mo-molybdopterin.

The enzyme catalyses nitrite + NAD(+) + H2O = nitrate + NADH + H(+). Regulated by the nitrogen source and controlled by the circadian rhythm. Its function is as follows. Nitrate reductase is a key enzyme involved in the first step of nitrate assimilation in plants, fungi and bacteria. This chain is Nitrate reductase [NADH] 1 (NIA1), found in Nicotiana tabacum (Common tobacco).